A 675-amino-acid chain; its full sequence is UvrABC system protein B (675 aa).

The Helicase ATP-binding domain maps to 35-192; sequence QGMRDGLMYQ…ARLVAMQYTR (158 aa). Position 48–55 (48–55) interacts with ATP; that stretch reads GVTGSGKT. Positions 101–124 match the Beta-hairpin motif; sequence YYDYYQPEAYVPTRDLFIEKDSSI. In terms of domain architecture, Helicase C-terminal spans 439–605; it reads QVDDLLGEIK…GVNKAVRELI (167 aa). Positions 633 to 668 constitute a UVR domain; it reads AREIRRLEKLMTDHARNLEFEQAAAARDALNALKQR.

Belongs to the UvrB family. Forms a heterotetramer with UvrA during the search for lesions. Interacts with UvrC in an incision complex.

The protein resides in the cytoplasm. Its function is as follows. The UvrABC repair system catalyzes the recognition and processing of DNA lesions. A damage recognition complex composed of 2 UvrA and 2 UvrB subunits scans DNA for abnormalities. Upon binding of the UvrA(2)B(2) complex to a putative damaged site, the DNA wraps around one UvrB monomer. DNA wrap is dependent on ATP binding by UvrB and probably causes local melting of the DNA helix, facilitating insertion of UvrB beta-hairpin between the DNA strands. Then UvrB probes one DNA strand for the presence of a lesion. If a lesion is found the UvrA subunits dissociate and the UvrB-DNA preincision complex is formed. This complex is subsequently bound by UvrC and the second UvrB is released. If no lesion is found, the DNA wraps around the other UvrB subunit that will check the other stand for damage. In Bordetella petrii (strain ATCC BAA-461 / DSM 12804 / CCUG 43448), this protein is UvrABC system protein B.